Here is a 42-residue protein sequence, read N- to C-terminus: Phospholipase A1 (42 aa).

This sequence belongs to the AB hydrolase superfamily. Lipase family. Post-translationally, contains six disulfide bonds. Expressed by the venom gland.

It localises to the secreted. The catalysed reaction is a 1,2-diacyl-sn-glycero-3-phosphocholine + H2O = a 2-acyl-sn-glycero-3-phosphocholine + a fatty acid + H(+). In terms of biological role, catalyzes the hydrolysis of phosphatidylcholine with phospholipase A1 activity. May act as an allergen and induce hemolytic activity. This Polistes gallicus (Paper wasp) protein is Phospholipase A1.